A 251-amino-acid chain; its full sequence is MTAQMFTIALLLSLSAIAAAGTIKTAPARTPSTQDDASFPPDGAPVKRFDAFTTGFGHSKRNFDEIDRSGFGFAKKNFDEIDRSGFGFNKRNFDEIDRSGFGFNKRNFDEIDRSGFGFNKRNFDEIDRSGFGFNKRNFDEIDRSGFGFNKRNFDEIDRSGFGFNKRNFDEIDRSGFGFVKRVYVPRYIANLYKRNFDEIDRSGFGFNKRNFDEIDRTGFGFHKRDYDVFPDKRNFDEIDRSGFGFVRRNVE.

The N-terminal stretch at methionine 1–alanine 20 is a signal peptide. Propeptides lie at residues glycine 21 to valine 46, aspartate 225 to aspartate 231, and asparagine 249 to glutamate 251.

The protein belongs to the orcokinin family.

Its subcellular location is the secreted. Functionally, myotropic peptides that enhance both the frequency and amplitude of spontaneous hindgut contractions. This is Orcokinin peptides type A from Procambarus clarkii (Red swamp crayfish).